Reading from the N-terminus, the 554-residue chain is Glucose-6-phosphate isomerase (554 aa).

The active-site Proton donor is the Glu359. Catalysis depends on residues His390 and Lys518.

It belongs to the GPI family.

The protein resides in the cytoplasm. It catalyses the reaction alpha-D-glucose 6-phosphate = beta-D-fructose 6-phosphate. Its pathway is carbohydrate biosynthesis; gluconeogenesis. It functions in the pathway carbohydrate degradation; glycolysis; D-glyceraldehyde 3-phosphate and glycerone phosphate from D-glucose: step 2/4. Catalyzes the reversible isomerization of glucose-6-phosphate to fructose-6-phosphate. The sequence is that of Glucose-6-phosphate isomerase from Pseudomonas putida (strain GB-1).